Here is a 913-residue protein sequence, read N- to C-terminus: MDTASISSTSSNSKSSKEQIKYTFTDFDNDIKNEINELYSYSELSILKKSNISNQFYHDLHEYTSKNKWRDLTDIEKIDYLQHLIGFFELSMKGQDNYNRYLLKSRFIWYIAQGVRDETHDRKDQLHQSKLNCILLREINALPIILKTLVLSSQISNETLRNQQQQQQQQQQQQQQQQQQQQQQNENEGSGEGGTNFTTTTTTTTTTTTANTFISHGKRNNIIKNNSGSVSGVIKNINSNGTLSSSMKVNVKRADLLMSILLDIIYLIIINNKDDELFKEEIFESLEGCNNNNNNNNNYNNNILGKNNNNGTNCDNPNLISIILQLLSEFNEIDGNLYPIKKILMVLWKSLTIFMGGLEDLDRLKQERLDNVGYKKGTPKTRSYDISNFIKSTQRYHSQLKSNSVLHKVNTHYLGTPKEYKDVDVFRLPLSLSDSLSVLQTNLYPPEKVRKEIGINYYSFNNNDTITPHTQSDYFYNTSNISSSKKQIKPRILIDNPSNFERFYCMNVSNFSKIVIILLKILLAATPVVKNYTGPINLIAEIVIDQSSPGSSASLVETMQSAIDFLRHKEIISKSTLGILLLIIKHSKFNQHLQFEYLSKIMYESNALVLLYKCLNHESVEKYLFSQNYLNSEEYFNEESLPSSSAASPPPPPIFQPLNCSGSSINSISSGGAGCEGGGANPPPVQLFENYKNLFSTITSLKLIQKVMKHHPSRISSLSASKSANILKKYCSINHPMIRLYSLKVIKNLVPYQTKKWKQINMRIISDIYLEVPIHINDNWLFSHNSAINNNNNNSNNNNNNNNNNSTNNDNGLTDEHEVTLQEKVEEYHRVNYEQWYTNDGLDMCYKNDHSMGIGIFDDLLNSLQLTTEEKQAIENDRLAYIDKDEGSSLIFMNDALEDELLFNKWNIQKPKF.

3 stretches are compositionally biased toward low complexity: residues Gln-177–Glu-188, Thr-195–Thr-204, and Asn-791–Asn-811. 2 disordered regions span residues Gln-177–Thr-204 and Asn-791–Thr-814.

This sequence belongs to the STRIP family.

The protein is Striatin-interacting protein homolog (fam40) of Dictyostelium discoideum (Social amoeba).